Here is a 253-residue protein sequence, read N- to C-terminus: Exosome complex component Rrp4 (253 aa).

The 74-residue stretch at 80-153 (GDIVIGIVVD…SRGPILTVQD (74 aa)) folds into the S1 motif domain.

The protein belongs to the RRP4 family. As to quaternary structure, component of the archaeal exosome complex. Forms a trimer of Rrp4 and/or Csl4 subunits. The trimer associates with a hexameric ring-like arrangement composed of 3 Rrp41-Rrp42 heterodimers.

It is found in the cytoplasm. Its function is as follows. Non-catalytic component of the exosome, which is a complex involved in RNA degradation. Increases the RNA binding and the efficiency of RNA degradation. Confers strong poly(A) specificity to the exosome. This Ignisphaera aggregans (strain DSM 17230 / JCM 13409 / AQ1.S1) protein is Exosome complex component Rrp4.